The chain runs to 196 residues: Histone H1.0-B (196 aa).

Disordered regions lie at residues 1-29 (MAEN…PKYS) and 86-196 (GVGA…GRKK). The H15 domain occupies 24 to 97 (DHPKYSDMIL…GASGSFRLAK (74 aa)). Positions 104–196 (PAKKPKKEIK…ASPKKSGRKK (93 aa)) are enriched in basic residues.

Belongs to the histone H1/H5 family.

The protein resides in the nucleus. The protein localises to the chromosome. Functionally, histones H1 are necessary for the condensation of nucleosome chains into higher-order structures. The histones H1.0 are found in cells that are in terminal stages of differentiation or that have low rates of cell division. The polypeptide is Histone H1.0-B (h1-0-b) (Xenopus laevis (African clawed frog)).